We begin with the raw amino-acid sequence, 67 residues long: uncharacterized protein (67 aa).

The stretch at Ala-17–Gln-47 forms a coiled coil.

This is an uncharacterized protein from Bacillus subtilis (strain 168).